We begin with the raw amino-acid sequence, 84 residues long: Large ribosomal subunit protein bL27 (84 aa).

Residues 1–22 (MAHKKAGGSTRNGRDSESKRLG) are disordered.

Belongs to the bacterial ribosomal protein bL27 family.

The chain is Large ribosomal subunit protein bL27 from Shewanella oneidensis (strain ATCC 700550 / JCM 31522 / CIP 106686 / LMG 19005 / NCIMB 14063 / MR-1).